The primary structure comprises 691 residues: Pentatricopeptide repeat-containing protein At4g37170 (691 aa).

12 PPR repeats span residues 84 to 118, 119 to 149, 150 to 184, 185 to 211, 217 to 251, 252 to 286, 287 to 317, 318 to 352, 353 to 383, 384 to 418, 419 to 449, and 455 to 485; these read PASTYCNLIQVCSQTRALEEGKKVHEHIRTSGFVP, GIVIWNRLLRMYAKCGSLVDARKVFDEMPNR, DLCSWNVMVNGYAEVGLLEEARKLFDEMTEKDSYS, WTAMVTGYVKKDQPEEALVLYSLMQRV, NIFTVSIAVAAAAAVKCIRRGKEIHGHIVRAGLDS, DEVLWSSLMDMYGKCGCIDEARNIFDKIVEKDVVS, WTSMIDRYFKSSRWREGFSLFSELVGSCERP, NEYTFAGVLNACADLTTEELGKQVHGYMTRVGFDP, YSFASSSLVDMYTKCGNIESAKHVVDGCPKP, DLVSWTSLIGGCAQNGQPDEALKYFDLLLKSGTKP, DHVTFVNVLSACTHAGLVEKGLEFFYSITEK, and TSDHYTCLVDLLARSGRFEQLKSVISEMPMK. The interval 490-565 is type E motif; sequence LWASVLGGCS…RPGSSWTEIK (76 aa). The segment at 566–596 is type E(+) motif; the sequence is RKRHVFIAADTSHPMYNQIVEFLRELRKKMK. Residues 597-691 form a type DYW motif region; the sequence is EEGYVPATSL…NGQCSCGDYW (95 aa).

It belongs to the PPR family. PCMP-H subfamily.

This is Pentatricopeptide repeat-containing protein At4g37170 (PCMP-H5) from Arabidopsis thaliana (Mouse-ear cress).